A 454-amino-acid polypeptide reads, in one-letter code: Glutamate mutase epsilon subunit (454 aa).

Arginine 67 lines the L-glutamate pocket. Glycine 69 contributes to the adenosylcob(III)alamin binding site. Arginine 99 lines the L-glutamate pocket. Asparagine 122 serves as a coordination point for adenosylcob(III)alamin. L-glutamate contacts are provided by residues 148-149, glutamate 170, and tyrosine 176; that span reads RH. Proline 179 serves as a coordination point for adenosylcob(III)alamin. An L-glutamate-binding site is contributed by tyrosine 180. The adenosylcob(III)alamin site is built by phenylalanine 296, lysine 325, glutamate 329, and isoleucine 333.

Belongs to the methylaspartate mutase GlmE subunit family. As to quaternary structure, heterotetramer composed of 2 epsilon subunits (GlmE) and 2 sigma subunits (GlmS). GlmE exists as a homodimer and GlmS as a monomer. It depends on adenosylcob(III)alamin as a cofactor.

It catalyses the reaction (2S,3S)-3-methyl-L-aspartate = L-glutamate. The protein operates within amino-acid degradation; L-glutamate degradation via mesaconate pathway; acetate and pyruvate from L-glutamate: step 1/4. Its function is as follows. Catalyzes the carbon skeleton rearrangement of L-glutamate to L-threo-3-methylaspartate ((2S,3S)-3-methylaspartate). The protein is Glutamate mutase epsilon subunit of Shigella dysenteriae serotype 1 (strain Sd197).